A 356-amino-acid chain; its full sequence is MKKHNFNAGPSILPREVIEKTAQAVLDFNGSGLSIMEISHRAKDFQPVVDEAVALFKELLNIPEGYSVLFLGGGASLEFCMIPFNFLEKKAAYLNTGVWAKKAMKEAKAFGEVVEVASSAEATYTYIPKDYTVPADADYFHVTTNNTIYGTELHEDLDSPVPMIADMSSDIFSRPIDVSKYICIYGGAQKNLAPAGVTFVIVKNDAVGKVSRYIPTMLNYQTHIDGGSMFNTPPVLPIYAALQTLRWIKANGGVAEMQKRAKEKADMLYAEIDRNKMFRGTVTDKADRSYMNICFVMNDEYKDLEADFLKFATEKGMVGIKGHRSVGGFRASCYNAMPKESVQALIDCMQEFEKLH.

Arg-41 serves as a coordination point for L-glutamate. Residues 75–76 (AS), Trp-99, Thr-147, Asp-166, and Gln-189 each bind pyridoxal 5'-phosphate. Lys-190 carries the N6-(pyridoxal phosphate)lysine modification. 231–232 (NT) is a binding site for pyridoxal 5'-phosphate.

It belongs to the class-V pyridoxal-phosphate-dependent aminotransferase family. SerC subfamily. In terms of assembly, homodimer. It depends on pyridoxal 5'-phosphate as a cofactor.

It is found in the cytoplasm. It catalyses the reaction O-phospho-L-serine + 2-oxoglutarate = 3-phosphooxypyruvate + L-glutamate. It carries out the reaction 4-(phosphooxy)-L-threonine + 2-oxoglutarate = (R)-3-hydroxy-2-oxo-4-phosphooxybutanoate + L-glutamate. Its pathway is amino-acid biosynthesis; L-serine biosynthesis; L-serine from 3-phospho-D-glycerate: step 2/3. It functions in the pathway cofactor biosynthesis; pyridoxine 5'-phosphate biosynthesis; pyridoxine 5'-phosphate from D-erythrose 4-phosphate: step 3/5. In terms of biological role, catalyzes the reversible conversion of 3-phosphohydroxypyruvate to phosphoserine and of 3-hydroxy-2-oxo-4-phosphonooxybutanoate to phosphohydroxythreonine. This Phocaeicola vulgatus (strain ATCC 8482 / DSM 1447 / JCM 5826 / CCUG 4940 / NBRC 14291 / NCTC 11154) (Bacteroides vulgatus) protein is Phosphoserine aminotransferase.